Consider the following 86-residue polypeptide: Probable weak neurotoxin NNAM3 (86 aa).

Positions 1–21 (MKTLLLTLVVVTIVCLDLGYT) are cleaved as a signal peptide. 5 disulfides stabilise this stretch: C24-C45, C27-C32, C38-C63, C67-C78, and C79-C84.

The protein belongs to the three-finger toxin family. Ancestral subfamily. Orphan group II sub-subfamily. In terms of tissue distribution, expressed by the venom gland.

It is found in the secreted. Binds with low affinity to muscular (alpha-1-beta-1-delta-epsilon/CHRNA1-CHRNB1-CHRND-CHRNE) and very low affinity to neuronal (alpha-7/CHRNA7) nicotinic acetylcholine receptor (nAChR). The polypeptide is Probable weak neurotoxin NNAM3 (Naja atra (Chinese cobra)).